We begin with the raw amino-acid sequence, 347 residues long: Holliday junction branch migration complex subunit RuvB (347 aa).

A compositionally biased stretch (polar residues) spans 1–10 (MAIVSSSSGR). The tract at residues 1–29 (MAIVSSSSGRKSPCRETALVDPQPAPEEQ) is disordered. Positions 13-198 (PCRETALVDP…FGLIQRLEFY (186 aa)) are large ATPase domain (RuvB-L). Residues L37, R38, G79, K82, T83, T84, R188, Y198, and R235 each coordinate ATP. A Mg(2+)-binding site is contributed by T83. Positions 199 to 270 (GQTDLEAIVA…MVAEALSLHR (72 aa)) are small ATPAse domain (RuvB-S). Residues 273 to 347 (HRGLDASDRR…AARSHIAEAA (75 aa)) are head domain (RuvB-H). Residues R328 and R333 each coordinate DNA.

This sequence belongs to the RuvB family. In terms of assembly, homohexamer. Forms an RuvA(8)-RuvB(12)-Holliday junction (HJ) complex. HJ DNA is sandwiched between 2 RuvA tetramers; dsDNA enters through RuvA and exits via RuvB. An RuvB hexamer assembles on each DNA strand where it exits the tetramer. Each RuvB hexamer is contacted by two RuvA subunits (via domain III) on 2 adjacent RuvB subunits; this complex drives branch migration. In the full resolvosome a probable DNA-RuvA(4)-RuvB(12)-RuvC(2) complex forms which resolves the HJ.

It is found in the cytoplasm. It catalyses the reaction ATP + H2O = ADP + phosphate + H(+). In terms of biological role, the RuvA-RuvB-RuvC complex processes Holliday junction (HJ) DNA during genetic recombination and DNA repair, while the RuvA-RuvB complex plays an important role in the rescue of blocked DNA replication forks via replication fork reversal (RFR). RuvA specifically binds to HJ cruciform DNA, conferring on it an open structure. The RuvB hexamer acts as an ATP-dependent pump, pulling dsDNA into and through the RuvAB complex. RuvB forms 2 homohexamers on either side of HJ DNA bound by 1 or 2 RuvA tetramers; 4 subunits per hexamer contact DNA at a time. Coordinated motions by a converter formed by DNA-disengaged RuvB subunits stimulates ATP hydrolysis and nucleotide exchange. Immobilization of the converter enables RuvB to convert the ATP-contained energy into a lever motion, pulling 2 nucleotides of DNA out of the RuvA tetramer per ATP hydrolyzed, thus driving DNA branch migration. The RuvB motors rotate together with the DNA substrate, which together with the progressing nucleotide cycle form the mechanistic basis for DNA recombination by continuous HJ branch migration. Branch migration allows RuvC to scan DNA until it finds its consensus sequence, where it cleaves and resolves cruciform DNA. The chain is Holliday junction branch migration complex subunit RuvB from Synechococcus sp. (strain CC9902).